The following is a 440-amino-acid chain: Chromosome partition protein MukF (440 aa).

A leucine-zipper region spans residues 208–236 (LSETSGTLRELQDTLEAAGDKLQANLLRI).

It belongs to the MukF family. In terms of assembly, interacts, and probably forms a ternary complex, with MukE and MukB via its C-terminal region. The complex formation is stimulated by calcium or magnesium. It is required for an interaction between MukE and MukB.

Its subcellular location is the cytoplasm. It is found in the nucleoid. In terms of biological role, involved in chromosome condensation, segregation and cell cycle progression. May participate in facilitating chromosome segregation by condensation DNA from both sides of a centrally located replisome during cell division. Not required for mini-F plasmid partitioning. Probably acts via its interaction with MukB and MukE. Overexpression results in anucleate cells. It has a calcium binding activity. This is Chromosome partition protein MukF from Citrobacter koseri (strain ATCC BAA-895 / CDC 4225-83 / SGSC4696).